The sequence spans 344 residues: Heme A synthase (344 aa).

9 consecutive transmembrane segments (helical) span residues 20–40 (IAWW…VGGL), 104–124 (RFLG…FVVT), 135–155 (LIFL…MVMS), 170–190 (AHLG…LDLL), 205–225 (AAAI…VAGI), 233–253 (TWPL…TPVW), 265–285 (FQHR…WWAA), 296–316 (WLAV…LWVV), and 317–337 (PIPL…VAVW). Residue His-267 coordinates heme. Heme is bound at residue His-324.

It belongs to the COX15/CtaA family. Type 2 subfamily. As to quaternary structure, interacts with CtaB. Requires heme b as cofactor.

It localises to the cell membrane. The catalysed reaction is Fe(II)-heme o + 2 A + H2O = Fe(II)-heme a + 2 AH2. The protein operates within porphyrin-containing compound metabolism; heme A biosynthesis; heme A from heme O: step 1/1. Its function is as follows. Catalyzes the conversion of heme O to heme A by two successive hydroxylations of the methyl group at C8. The first hydroxylation forms heme I, the second hydroxylation results in an unstable dihydroxymethyl group, which spontaneously dehydrates, resulting in the formyl group of heme A. In Parvibaculum lavamentivorans (strain DS-1 / DSM 13023 / NCIMB 13966), this protein is Heme A synthase.